The following is a 445-amino-acid chain: Probable glycine dehydrogenase (decarboxylating) subunit 1 (445 aa).

Belongs to the GcvP family. N-terminal subunit subfamily. In terms of assembly, the glycine cleavage system is composed of four proteins: P, T, L and H. In this organism, the P 'protein' is a heterodimer of two subunits.

The catalysed reaction is N(6)-[(R)-lipoyl]-L-lysyl-[glycine-cleavage complex H protein] + glycine + H(+) = N(6)-[(R)-S(8)-aminomethyldihydrolipoyl]-L-lysyl-[glycine-cleavage complex H protein] + CO2. Functionally, the glycine cleavage system catalyzes the degradation of glycine. The P protein binds the alpha-amino group of glycine through its pyridoxal phosphate cofactor; CO(2) is released and the remaining methylamine moiety is then transferred to the lipoamide cofactor of the H protein. This is Probable glycine dehydrogenase (decarboxylating) subunit 1 from Anaeromyxobacter dehalogenans (strain 2CP-1 / ATCC BAA-258).